The sequence spans 739 residues: POU domain, class 2, transcription factor 1 (739 aa).

Positions 1-11 are enriched in polar residues; that stretch reads MNNPSETSKPS. Disordered regions lie at residues 1–39, 67–95, 253–277, 353–378, and 489–553; these read MNNP…GGPI, SLNV…SVQA, TPIQ…EEPS, DSTL…RRKK, and SVTG…SSPL. A compositionally biased stretch (low complexity) spans 81 to 95; that stretch reads SQQPSQPSQQPSVQA. The POU-specific domain occupies 274 to 348; it reads EEPSDLEELE…LLEKWLNDAE (75 aa). The span at 353 to 364 shows a compositional bias: low complexity; the sequence is DSTLSSPSALNS. Residues 375–434 constitute a DNA-binding region (homeobox); the sequence is RRKKRTSIETNIRVALEKSFLENQKPTSEEITMIADQLNMEKEVIRVWFCNRRQKEKRIN. The segment covering 489–552 has biased composition (low complexity); the sequence is SVTGTTETTS…QTTSTPLSSP (64 aa).

Belongs to the POU transcription factor family. Class-2 subfamily. As to quaternary structure, interacts with NR3C1, AR and PGR.

The protein resides in the nucleus. Its function is as follows. Transcription factor that binds to the octamer motif (5'-ATTTGCAT-3') and activates the promoters of the genes for some small nuclear RNAs (snRNA) and of genes such as those for histone H2B and immunoglobulins. Modulates transcription transactivation by NR3C1, AR and PGR. The polypeptide is POU domain, class 2, transcription factor 1 (POU2F1) (Gallus gallus (Chicken)).